A 74-amino-acid polypeptide reads, in one-letter code: Mu-Sparatoxin-Hp2 (74 aa).

A signal peptide spans 1–20 (MKIIVLMMMLFAAFSAVVLA). Positions 21–35 (DKSIEDAALDTVMDR) are excised as a propeptide. 3 disulfides stabilise this stretch: cysteine 42–cysteine 57, cysteine 49–cysteine 62, and cysteine 56–cysteine 66. Leucine 73 carries the post-translational modification Leucine amide.

In terms of tissue distribution, expressed by the venom gland.

The protein resides in the secreted. Weakly nhibits voltage-gated sodium channels Nav1.7/SCN9A. High concentration of the toxin (3 uM) inhibits Nav1.7/SCN9A currents by 80%. The chain is Mu-Sparatoxin-Hp2 from Heteropoda pingtungensis (Pingtung huntsman spider).